Reading from the N-terminus, the 181-residue chain is Large ribosomal subunit protein uL5 (181 aa).

It belongs to the universal ribosomal protein uL5 family. In terms of assembly, part of the 50S ribosomal subunit; part of the 5S rRNA/L5/L18/L25 subcomplex. Contacts the 5S rRNA and the P site tRNA. Forms a bridge to the 30S subunit in the 70S ribosome.

Its function is as follows. This is one of the proteins that bind and probably mediate the attachment of the 5S RNA into the large ribosomal subunit, where it forms part of the central protuberance. In the 70S ribosome it contacts protein S13 of the 30S subunit (bridge B1b), connecting the 2 subunits; this bridge is implicated in subunit movement. Contacts the P site tRNA; the 5S rRNA and some of its associated proteins might help stabilize positioning of ribosome-bound tRNAs. This Nitrosococcus oceani (strain ATCC 19707 / BCRC 17464 / JCM 30415 / NCIMB 11848 / C-107) protein is Large ribosomal subunit protein uL5.